The sequence spans 346 residues: Guanine nucleotide-binding protein subunit beta-2 (346 aa).

7 WD repeats span residues 57–96, 99–138, 147–185, 188–227, 230–269, 274–313, and 316–346; these read GHIN…KVQI, LRSA…ASGV, GYEG…KTMD, GHAG…HKQM, GHDM…QIAQ, QKNT…HTGT, and GHEN…RLWL.

This sequence belongs to the WD repeat G protein beta family. G proteins are composed of 3 units, alpha, beta and gamma. Interacts with Ggamma30A/Guanine nucleotide-binding protein subunit gamma-e. As to expression, expressed exclusively in photoreceptor cells in the compound eye (at protein level).

The protein resides in the cytoplasm. It localises to the cell projection. It is found in the axon. Its subcellular location is the rhabdomere. In terms of biological role, guanine nucleotide-binding proteins (G proteins) are involved as a modulator or transducer in various transmembrane signaling systems. The beta and gamma chains are required for the GTPase activity, for replacement of GDP by GTP, and for G protein-effector interaction. This chain is Guanine nucleotide-binding protein subunit beta-2 (Gbeta76C), found in Drosophila melanogaster (Fruit fly).